We begin with the raw amino-acid sequence, 98 residues long: Aspartyl/glutamyl-tRNA(Asn/Gln) amidotransferase subunit C (98 aa).

Residues 75 to 98 form a disordered region; it reads EQALSGAPDSDDNRFKVPAILDEA.

The protein belongs to the GatC family. In terms of assembly, heterotrimer of A, B and C subunits.

The enzyme catalyses L-glutamyl-tRNA(Gln) + L-glutamine + ATP + H2O = L-glutaminyl-tRNA(Gln) + L-glutamate + ADP + phosphate + H(+). It carries out the reaction L-aspartyl-tRNA(Asn) + L-glutamine + ATP + H2O = L-asparaginyl-tRNA(Asn) + L-glutamate + ADP + phosphate + 2 H(+). In terms of biological role, allows the formation of correctly charged Asn-tRNA(Asn) or Gln-tRNA(Gln) through the transamidation of misacylated Asp-tRNA(Asn) or Glu-tRNA(Gln) in organisms which lack either or both of asparaginyl-tRNA or glutaminyl-tRNA synthetases. The reaction takes place in the presence of glutamine and ATP through an activated phospho-Asp-tRNA(Asn) or phospho-Glu-tRNA(Gln). The polypeptide is Aspartyl/glutamyl-tRNA(Asn/Gln) amidotransferase subunit C (Pseudarthrobacter chlorophenolicus (strain ATCC 700700 / DSM 12829 / CIP 107037 / JCM 12360 / KCTC 9906 / NCIMB 13794 / A6) (Arthrobacter chlorophenolicus)).